The chain runs to 370 residues: Probable protein phosphatase 2C 67 (370 aa).

The region spanning 35 to 344 (TFGEFSMAMI…DDITVIVVYL (310 aa)) is the PPM-type phosphatase domain. The Mn(2+) site is built by Asp77, Gly78, Asp276, and Asp335.

This sequence belongs to the PP2C family. As to quaternary structure, interacts with SAUR19. Interacts with AHA2 at the plasma membrane. Requires Mg(2+) as cofactor. The cofactor is Mn(2+).

Its subcellular location is the cell membrane. It carries out the reaction O-phospho-L-seryl-[protein] + H2O = L-seryl-[protein] + phosphate. It catalyses the reaction O-phospho-L-threonyl-[protein] + H2O = L-threonyl-[protein] + phosphate. Its function is as follows. Dephosphorylates and represses plasma membrane H(+)-ATPases (PM H(+)-ATPases, e.g. AHA1 and AHA2), thus influencing negatively plant growth and fitness. Promotes the apical hook maintenance of etiolated seedlings. The chain is Probable protein phosphatase 2C 67 from Arabidopsis thaliana (Mouse-ear cress).